We begin with the raw amino-acid sequence, 321 residues long: Urease accessory protein UreD (321 aa).

Belongs to the UreD family. In terms of assembly, ureD, UreF and UreG form a complex that acts as a GTP-hydrolysis-dependent molecular chaperone, activating the urease apoprotein by helping to assemble the nickel containing metallocenter of UreC. The UreE protein probably delivers the nickel.

The protein localises to the cytoplasm. Required for maturation of urease via the functional incorporation of the urease nickel metallocenter. This chain is Urease accessory protein UreD, found in Photorhabdus laumondii subsp. laumondii (strain DSM 15139 / CIP 105565 / TT01) (Photorhabdus luminescens subsp. laumondii).